The chain runs to 204 residues: Large ribosomal subunit protein eL15z (204 aa).

Positions 161–204 are disordered; the sequence is LRGLTSEGKKNRGLRGKGHNNHKNRPSRRATWKKNNSLSLRRYR. Positions 171–192 are enriched in basic residues; the sequence is NRGLRGKGHNNHKNRPSRRATW. The span at 193–204 shows a compositional bias: polar residues; sequence KKNNSLSLRRYR.

Belongs to the eukaryotic ribosomal protein eL15 family.

The protein is Large ribosomal subunit protein eL15z (RPL15A) of Arabidopsis thaliana (Mouse-ear cress).